A 321-amino-acid polypeptide reads, in one-letter code: Arginine-hydroxylase NDUFAF5, mitochondrial (321 aa).

Residues 1 to 25 (MNVSVKSLRGVSRTWRSFSSRQGMN) constitute a mitochondrion transit peptide.

Belongs to the methyltransferase superfamily. As to quaternary structure, interacts with NDUFS7.

Its subcellular location is the mitochondrion inner membrane. In terms of biological role, arginine hydroxylase that mediates hydroxylation of 'Arg-111' of NDUFS7 and is involved in the assembly of mitochondrial NADH:ubiquinone oxidoreductase complex (complex I, MT-ND1) at early stages. May also have methyltransferase activity. This is Arginine-hydroxylase NDUFAF5, mitochondrial from Danio rerio (Zebrafish).